Consider the following 701-residue polypeptide: Elongation factor G (701 aa).

The tr-type G domain maps to glutamate 8–valine 286. Residues alanine 17–threonine 24, aspartate 85–histidine 89, and asparagine 139–aspartate 142 each bind GTP.

Belongs to the TRAFAC class translation factor GTPase superfamily. Classic translation factor GTPase family. EF-G/EF-2 subfamily.

The protein resides in the cytoplasm. Functionally, catalyzes the GTP-dependent ribosomal translocation step during translation elongation. During this step, the ribosome changes from the pre-translocational (PRE) to the post-translocational (POST) state as the newly formed A-site-bound peptidyl-tRNA and P-site-bound deacylated tRNA move to the P and E sites, respectively. Catalyzes the coordinated movement of the two tRNA molecules, the mRNA and conformational changes in the ribosome. In Roseiflexus sp. (strain RS-1), this protein is Elongation factor G.